The following is a 489-amino-acid chain: CUGBP Elav-like family member 1-B (489 aa).

3 RRM domains span residues 16–99 (IKMF…PADS), 108–188 (RKLF…FADT), and 404–482 (ANLF…LKRS).

Belongs to the CELF/BRUNOL family. Oligomer. Oligomerization is required for RNA-binding and EDEN-dependent deadenylation. Post-translationally, phosphorylated during oocyte maturation and dephosphorylated following egg activation. Dephosphorylation is calcium dependent and correlates with the increase in the activity of EDEN-dependent deadenylation.

Its subcellular location is the nucleus. The protein resides in the cytoplasm. RNA-binding protein implicated in the regulation of several post-transcriptional events. May be involved in pre-mRNA alternative splicing, mRNA translation activation and stability. Mediates the rapid and sequence-specific cytoplasmic deadenylation of EDEN-containing maternal mRNAs following fertilization. Binds to AU-rich sequences (AREs) of jun mRNA. Binds to the embryonic deadenylation element (EDEN) motif localized in the 3'-UTR of maternal mRNAs. Binds to RNA containing several repeats of the consensus sequence 5'-UGU-3'. EDEN-dependent deadenylation is enhanced by the presence of an additional cis element composed of three AUU repeats. The polypeptide is CUGBP Elav-like family member 1-B (cugbp1-b) (Xenopus laevis (African clawed frog)).